The sequence spans 497 residues: COP9 signalosome complex subunit 6 (497 aa).

Residues 21-162 (VALHPLPILE…LTIYESNLEI (142 aa)) form the MPN domain. 3 disordered regions span residues 230-282 (ATED…KNRD), 324-350 (YLSSGDASSQQQQQQQQQQQTEGLDQP), and 435-497 (AKNS…RFDH). Positions 236 to 246 (SDKPLMKKVVD) are enriched in basic and acidic residues. Low complexity-rich tracts occupy residues 258–272 (SDDAAAEAPTTSSAA) and 333–343 (QQQQQQQQQQQ). Over residues 440–453 (RREQASHGGGERFN) the composition is skewed to basic and acidic residues. Residues 475–488 (VGEGSASGSGGSGP) are compositionally biased toward gly residues.

This sequence belongs to the peptidase M67A family. CSN6 subfamily. In terms of assembly, component of the COP9 signalosome (CSN) complex.

The protein localises to the cytoplasm. Its subcellular location is the nucleus. In terms of biological role, component of the COP9 signalosome (CSN) complex that acts as an regulator of the ubiquitin (Ubl) conjugation pathway by mediating the deneddylation of the cullin subunit of SCF-type E3 ubiquitin-protein ligase complexes. The CSN complex is involved in the regulation of the circadian clock through its control of the stability of the SCF(FWD1) complex. This Neurospora crassa (strain ATCC 24698 / 74-OR23-1A / CBS 708.71 / DSM 1257 / FGSC 987) protein is COP9 signalosome complex subunit 6 (csn-6).